Reading from the N-terminus, the 130-residue chain is MEWKIVVPLFAVAFTVANAGLIGGPMDANMNDQGTRDALQFAVVEHNKKTNDMFVRQVAKVVNAQKQVVSGMKYIFTVQMGRTPCRKGGVEKVCSVHKDPQMAVPYKCTFEVWSRPWMSDIQMVKNQCES.

The signal sequence occupies residues 1–19; the sequence is MEWKIVVPLFAVAFTVANA. The Secondary area of contact motif lies at 67 to 71; it reads QVVSG. 2 cysteine pairs are disulfide-bonded: cysteine 85-cysteine 94 and cysteine 108-cysteine 128.

This sequence belongs to the cystatin family.

It is found in the secreted. In terms of biological role, cysteine proteinase inhibitor. This is Cystatin from Oncorhynchus mykiss (Rainbow trout).